Consider the following 282-residue polypeptide: DegV domain-containing protein spr1415 (282 aa).

The region spanning 3–280 (LAVFTDSSAY…AGSIALGYIP (278 aa)) is the DegV domain. Residues Thr-61 and Ser-94 each coordinate hexadecanoate.

May bind long-chain fatty acids, such as palmitate, and may play a role in lipid transport or fatty acid metabolism. This is DegV domain-containing protein spr1415 from Streptococcus pneumoniae (strain ATCC BAA-255 / R6).